Here is an 87-residue protein sequence, read N- to C-terminus: Small ribosomal subunit protein uS17 (87 aa).

The protein belongs to the universal ribosomal protein uS17 family. In terms of assembly, part of the 30S ribosomal subunit.

In terms of biological role, one of the primary rRNA binding proteins, it binds specifically to the 5'-end of 16S ribosomal RNA. In Bacillus subtilis (strain 168), this protein is Small ribosomal subunit protein uS17.